The sequence spans 190 residues: MKCIVGLGNIGKRFELTRHNIGFEVVDYILEKNNFSLDKQKFKGAYTIERMNGDKVLFIEPMTMMNLSGEAVAPIMDYYNVNPEDLIVLYDDLDLEQGQVRLRQKGSAGGHNGMKSIIKMLGTDQFKRIRIGVGRPTNGMTVPDYVLQRFSNDEMVTMEKVIEHAGRAIEKFVETSRFDHVMNEFNGEVK.

A tRNA-binding site is contributed by phenylalanine 14. Histidine 19 functions as the Proton acceptor in the catalytic mechanism. TRNA is bound by residues methionine 64, asparagine 66, and asparagine 112.

Belongs to the PTH family. In terms of assembly, monomer.

It localises to the cytoplasm. The enzyme catalyses an N-acyl-L-alpha-aminoacyl-tRNA + H2O = an N-acyl-L-amino acid + a tRNA + H(+). Hydrolyzes ribosome-free peptidyl-tRNAs (with 1 or more amino acids incorporated), which drop off the ribosome during protein synthesis, or as a result of ribosome stalling. Its function is as follows. Catalyzes the release of premature peptidyl moieties from peptidyl-tRNA molecules trapped in stalled 50S ribosomal subunits, and thus maintains levels of free tRNAs and 50S ribosomes. In Staphylococcus aureus (strain bovine RF122 / ET3-1), this protein is Peptidyl-tRNA hydrolase.